Reading from the N-terminus, the 754-residue chain is ToMV resistance protein Tm-1(GCR237) (754 aa).

The segment at 1-201 (MATAQSNSPR…AGMVIGRLES (201 aa)) is N-terminal inhibitory domain NN. ATP contacts are provided by residues 18–20 (DTK), threonine 55, arginine 92, and 124–127 (GSGG). The tract at residues 211-431 (KFTVGVTMFG…VDSFLEISPK (221 aa)) is N-terminal inhibitory domain NC.

It belongs to the UPF0261 family. As to quaternary structure, homodimer. (Microbial infection) Binds, via an ATP bridge, to the tobamoviruses avirulent (Avr) replication proteins (large and small subunits, e.g. tomato mosaic virus (ToMV/TMV) AC P03587, tobacco mild green mosaic virus (TMGMV) AC P18339 and pepper mild mottle virus (PMMoV) AC P89657) to inhibit their function after the translation of tobamoviruses RNA, but before the viral replication complex formation on the membrane surfaces; this interaction is not possible with resistance-breaking strains replication proteins.

Its function is as follows. Inhibitor of viral RNA replication which confers resistance to some tobamoviruses including tomato mosaic virus (ToMV) (e.g. isolate L), tobacco mosaic virus (TMV), tobacco mild green mosaic virus (TMGMV) and pepper mild mottle virus (PMMoV), but not to resistance-breaking isolates of ToMV (e.g. LT1, SL-1 and ToMV1-2) and tomato brown rugose fruit virus (ToBRFV). Prevents tobamoviruses RNA replication by affecting the association of tobamoviruses replication proteins (large and small subunits) with host membrane-associated proteins (e.g. TOM1, TOM2A and ARL8), thus inhibiting the replication complex formation on the membranes and avoiding viral negative-strand RNA synthesis. Inhibits triphosphatase activity of ToMV replication proteins. This chain is ToMV resistance protein Tm-1(GCR237), found in Solanum lycopersicum (Tomato).